The primary structure comprises 250 residues: Uracil-DNA glycosylase (250 aa).

The Proton acceptor role is filled by Asp-78. The segment at 228 to 250 (RGQKPVDWSGEQNNASRQGEFAL) is disordered.

The protein belongs to the uracil-DNA glycosylase (UDG) superfamily. UNG family.

Its subcellular location is the cytoplasm. The enzyme catalyses Hydrolyzes single-stranded DNA or mismatched double-stranded DNA and polynucleotides, releasing free uracil.. In terms of biological role, excises uracil residues from the DNA which can arise as a result of misincorporation of dUMP residues by DNA polymerase or due to deamination of cytosine. This is Uracil-DNA glycosylase from Bordetella pertussis (strain Tohama I / ATCC BAA-589 / NCTC 13251).